The following is a 239-amino-acid chain: NADH-quinone oxidoreductase chain 2 (239 aa).

Residues Cys-96, Cys-101, Cys-137, and Cys-141 each coordinate [2Fe-2S] cluster.

Belongs to the complex I 24 kDa subunit family. In terms of assembly, NDH-1 is composed of at least 14 different subunits, Nqo1 to Nqo14. The complex has a L-shaped structure, with the hydrophobic arm (subunits Nqo7, Nqo8, Nqo10 to Nqo14) embedded in the inner membrane and the hydrophilic peripheral arm (subunits Nqo1 to Nqo6, Nqo9) protruding into the bacterial cytoplasm. The hydrophilic domain contains all the redox centers. [2Fe-2S] cluster is required as a cofactor.

Its subcellular location is the cell inner membrane. The enzyme catalyses a quinone + NADH + 5 H(+)(in) = a quinol + NAD(+) + 4 H(+)(out). In terms of biological role, NDH-1 shuttles electrons from NADH, via FMN and iron-sulfur (Fe-S) centers, to quinones in the respiratory chain. The immediate electron acceptor for the enzyme in this species is believed to be ubiquinone. Couples the redox reaction to proton translocation (for every two electrons transferred, four hydrogen ions are translocated across the cytoplasmic membrane), and thus conserves the redox energy in a proton gradient. In Paracoccus denitrificans, this protein is NADH-quinone oxidoreductase chain 2 (nqo2).